The chain runs to 282 residues: Pantothenate synthetase (282 aa).

An ATP-binding site is contributed by 30–37 (MGYLHQGH). Residue His-37 is the Proton donor of the active site. Residue Gln-61 coordinates (R)-pantoate. Gln-61 lines the beta-alanine pocket. 147-150 (GQKD) contributes to the ATP binding site. Position 153 (Gln-153) interacts with (R)-pantoate. ATP contacts are provided by residues Val-176 and 184–187 (MSSR).

Belongs to the pantothenate synthetase family. Homodimer.

It is found in the cytoplasm. It carries out the reaction (R)-pantoate + beta-alanine + ATP = (R)-pantothenate + AMP + diphosphate + H(+). Its pathway is cofactor biosynthesis; (R)-pantothenate biosynthesis; (R)-pantothenate from (R)-pantoate and beta-alanine: step 1/1. In terms of biological role, catalyzes the condensation of pantoate with beta-alanine in an ATP-dependent reaction via a pantoyl-adenylate intermediate. In Geotalea daltonii (strain DSM 22248 / JCM 15807 / FRC-32) (Geobacter daltonii), this protein is Pantothenate synthetase.